Consider the following 509-residue polypeptide: GMP synthase [glutamine-hydrolyzing] (509 aa).

Residues 4 to 193 (NVLILDFGSQ…LIKIAGTKAT (190 aa)) form the Glutamine amidotransferase type-1 domain. The active-site Nucleophile is the C79. Active-site residues include H167 and E169. Residues 194–384 (WTPGKFVDLT…LGIDKELLGR (191 aa)) form the GMPS ATP-PPase domain. 221-227 (SGGVDST) provides a ligand contact to ATP.

In terms of assembly, homodimer.

The catalysed reaction is XMP + L-glutamine + ATP + H2O = GMP + L-glutamate + AMP + diphosphate + 2 H(+). It participates in purine metabolism; GMP biosynthesis; GMP from XMP (L-Gln route): step 1/1. In terms of biological role, catalyzes the synthesis of GMP from XMP. This Christiangramia forsetii (strain DSM 17595 / CGMCC 1.15422 / KT0803) (Gramella forsetii) protein is GMP synthase [glutamine-hydrolyzing].